Here is an 861-residue protein sequence, read N- to C-terminus: MDKKEYSETFYHPYKPYDIQVQLMETVYRVLSEGKKIAILESPTGTGKTLSLICATMTWLRMNKADIFTRMETNIKTNEDDSENLSDDEPDWVIDTYRKSVLQEKVDLLNDYEKHLNEINTTSCKQLKTMCDLDKEHGRYKSVDPLRKKRKGARHLDVSLEEQDFIPRPYESDSENNDTSKSTRGGRISDKDYKLSELNSQIITLLDKIDGKVSRDPNNGDRFDVTNQNPVKIYYASRTYSQLGQFTSQLRLPSFPSSFRDKVPNEKVKYLPLASKKQLCINPKVMKWKTLEAINDACADLRHSKEGCMFYQNTNEWRHCPDTLALRDMIFSEIQDIEDLVPLGKSLGICPYYASREALPIAEVVTLPYQYLLSESTRSSLQINLENSIVIIDEAHNLIETINSIYSSQISLEDLKNCHKGIVTYFNKFKSRLNPGNRVNLLKLNSLLMTLIQFIVKNFKKIGQEIDPNDMFTGSNIDTLNIHKLLRYIKVSKIAYKIDTYNQALKEEESSKNENPIKETHKKSVSSQPLLFKVSQFLYCLTNLTSEGQFFFEKNYSIKYMLLEPSKPFESILNQAKCVVLAGGTMEPMSEFLSNLLPEVPSKDITTLSCNHVIPKENLQTYITNQPELEFTFEKRMSPSLVNNHLFQFFVDLSKAVPKKGGIVAFFPSYQYLAHVIQCWKQNDRFATLNNVRKIFYEAKDGDDILSGYSDSVAEGRGSLLLAIVGGKLSEGINFQDDLCRAVVMVGLPFPNIFSGELIVKRKHLAAKIMKSGGTEEEASRATKEFMENICMKAVNQSVGRAIRHANDYANIYLLDVRYNRPNFRKKLSRWVQDSINSEHTTHQVISSTRKFFSMRSLNSR.

Residues 6 to 458 (YSETFYHPYK…MTLIQFIVKN (453 aa)) form the Helicase ATP-binding domain. 42 to 49 (SPTGTGKT) serves as a coordination point for ATP. Residues serine 86 and serine 172 each carry the phosphoserine modification. The segment at 161 to 188 (EEQDFIPRPYESDSENNDTSKSTRGGRI) is disordered. Residues cysteine 280, cysteine 298, cysteine 308, and cysteine 350 each coordinate [4Fe-4S] cluster. The DEAH box motif lies at 393-396 (DEAH).

Belongs to the DEAD box helicase family. DEAH subfamily. DDX11/CHL1 sub-subfamily. [4Fe-4S] cluster is required as a cofactor.

It localises to the nucleus. It catalyses the reaction Couples ATP hydrolysis with the unwinding of duplex DNA at the replication fork by translocating in the 5'-3' direction. This creates two antiparallel DNA single strands (ssDNA). The leading ssDNA polymer is the template for DNA polymerase III holoenzyme which synthesizes a continuous strand.. It carries out the reaction ATP + H2O = ADP + phosphate + H(+). Its function is as follows. ATP-dependent DNA helicase important for chromosome transmission and normal cell cycle progression in G(2)/M. May have a role in changing DNA topology to allow the loading of proteins involved in maintaining sister chromatid cohesion in the vicinity of the centromeres. Has a specific role in chromosome segregation during meiosis II. The polypeptide is ATP-dependent DNA helicase CHL1 (CHL1) (Saccharomyces cerevisiae (strain YJM789) (Baker's yeast)).